Reading from the N-terminus, the 193-residue chain is Putative 3-methyladenine DNA glycosylase (193 aa).

The protein belongs to the DNA glycosylase MPG family.

The protein is Putative 3-methyladenine DNA glycosylase of Agrobacterium fabrum (strain C58 / ATCC 33970) (Agrobacterium tumefaciens (strain C58)).